We begin with the raw amino-acid sequence, 74 residues long: Conotoxin AbVIA (74 aa).

The N-terminal stretch at 1 to 17 is a signal peptide; the sequence is VLIIAVLFLTACQLTTA. Residues 18 to 38 constitute a propeptide that is removed on maturation; sequence VTSSRGEQKHRALRSTDKKFK. 3 cysteine pairs are disulfide-bonded: Cys-43–Cys-57, Cys-50–Cys-61, and Cys-56–Cys-68. Ser-73 carries the serine amide modification.

The protein belongs to the conotoxin O1 superfamily. As to expression, expressed by the venom duct.

The protein resides in the secreted. The protein is Conotoxin AbVIA of Conus abbreviatus (Abbreviated cone).